A 149-amino-acid chain; its full sequence is Protein DOWN-REGULATED IN DIF1 11 (149 aa).

Positions 1-22 are cleaved as a signal peptide; the sequence is MEKAILITFLIATTSMVYQTIG.

Mostly expressed in embryo sac cells. Restricted to synergid cells, especially in the filiform apparatus of mature female gametophyte, via MYB98-mediated transcription regulation. Also detected at low levels in egg and central cells.

The protein is Protein DOWN-REGULATED IN DIF1 11 of Arabidopsis thaliana (Mouse-ear cress).